The sequence spans 422 residues: MVNLIESDSIWKRNFNYLFFSRIVKISGDMFAFNSILWFLIYDGKGAIGTALLIAVTFLPEAVLAPVTGPFMKQTTLKFWMYFSDLTRAAIVLIIPLCHFAGFSPLWFVMTLMIVHSATGAAYNPASIALIPQIVNEQGIQKANAVLQSSAQIVRLGAVTLCGAFLTFISPSYTMLIALVLYLVSGFLVLFIKYTAVESQSESAVVTQRGTYIGRLKRGFRLVRKHQILYPLAIYCIFMNFAAAPWEALSAVYVAEDLNGQPIVYSLLKATTAAGAFLLGFVLAKVKVNRYGLLFVTAGIIEGFAFFITGMNTFLPLVFFAAFTFGAAVSAVNVPEYTIIQTSVDSEDQPQVYAVIHMISNISIPAGAVICGYAANAFGSGKVIAVGGIVEIIAGIGILLFTKLAKAERSDLIKEREASVHL.

12 helical membrane-spanning segments follow: residues 23–43, 47–67, 90–110, 112–132, 151–171, 172–192, 228–248, 263–283, 291–308, 318–340, 352–372, and 381–401; these read IVKI…LIYD, AIGT…LAPV, AIVL…WFVM, LMIV…ALIP, AQIV…FISP, SYTM…VLFI, ILYP…PWEA, IVYS…GFVL, YGLL…AFFI, VFFA…YTII, VYAV…VICG, and GKVI…ILLF.

Belongs to the major facilitator superfamily.

It is found in the cell membrane. This is an uncharacterized protein from Bacillus subtilis (strain 168).